The primary structure comprises 150 residues: MQIFVDADACPAVIKDMLFRVARRTGICVTLVANQFLRTPPSPHIKALQVPAGFDEADARIVELAQPGDLVVTADIPLAAALLDKGAHPLDPRGNWFSRENIDERLSTRAMMEQLRSAGIDTGGPAPFSARDANAFASQLDRFVARHGKP.

This sequence belongs to the UPF0178 family.

This chain is UPF0178 protein Bcep1808_1605, found in Burkholderia vietnamiensis (strain G4 / LMG 22486) (Burkholderia cepacia (strain R1808)).